The sequence spans 229 residues: Small ribosomal subunit protein uS3 (229 aa).

One can recognise a KH type-2 domain in the interval 38-106; sequence IREYIENKLF…KVHINVMEVK (69 aa). The span at 208–217 shows a compositional bias: acidic residues; that stretch reads PEVDENEETK. Residues 208 to 229 are disordered; sequence PEVDENEETKEENKEKSEEKSE. The span at 218–229 shows a compositional bias: basic and acidic residues; that stretch reads EENKEKSEEKSE.

Belongs to the universal ribosomal protein uS3 family. In terms of assembly, part of the 30S ribosomal subunit. Forms a tight complex with proteins S10 and S14.

Binds the lower part of the 30S subunit head. Binds mRNA in the 70S ribosome, positioning it for translation. This Natranaerobius thermophilus (strain ATCC BAA-1301 / DSM 18059 / JW/NM-WN-LF) protein is Small ribosomal subunit protein uS3.